Here is a 368-residue protein sequence, read N- to C-terminus: 1-deoxy-D-xylulose 5-phosphate reductoisomerase (368 aa).

Positions 7, 8, 9, 10, 31, 32, 33, and 113 each coordinate NADPH. Residue Lys114 coordinates 1-deoxy-D-xylulose 5-phosphate. Glu115 is a binding site for NADPH. Asp133 serves as a coordination point for Mn(2+). The 1-deoxy-D-xylulose 5-phosphate site is built by Ser134, Glu135, Ser158, and His181. Position 135 (Glu135) interacts with Mn(2+). Residue Gly187 participates in NADPH binding. 4 residues coordinate 1-deoxy-D-xylulose 5-phosphate: Ser194, Asn199, Lys200, and Glu203. Glu203 serves as a coordination point for Mn(2+).

Belongs to the DXR family. Mg(2+) is required as a cofactor. Requires Mn(2+) as cofactor.

It carries out the reaction 2-C-methyl-D-erythritol 4-phosphate + NADP(+) = 1-deoxy-D-xylulose 5-phosphate + NADPH + H(+). It participates in isoprenoid biosynthesis; isopentenyl diphosphate biosynthesis via DXP pathway; isopentenyl diphosphate from 1-deoxy-D-xylulose 5-phosphate: step 1/6. Its function is as follows. Catalyzes the NADPH-dependent rearrangement and reduction of 1-deoxy-D-xylulose-5-phosphate (DXP) to 2-C-methyl-D-erythritol 4-phosphate (MEP). The protein is 1-deoxy-D-xylulose 5-phosphate reductoisomerase of Helicobacter pylori (strain ATCC 700392 / 26695) (Campylobacter pylori).